We begin with the raw amino-acid sequence, 577 residues long: Proline--tRNA ligase (577 aa).

This sequence belongs to the class-II aminoacyl-tRNA synthetase family. ProS type 1 subfamily. In terms of assembly, homodimer.

The protein resides in the cytoplasm. It carries out the reaction tRNA(Pro) + L-proline + ATP = L-prolyl-tRNA(Pro) + AMP + diphosphate. In terms of biological role, catalyzes the attachment of proline to tRNA(Pro) in a two-step reaction: proline is first activated by ATP to form Pro-AMP and then transferred to the acceptor end of tRNA(Pro). As ProRS can inadvertently accommodate and process non-cognate amino acids such as alanine and cysteine, to avoid such errors it has two additional distinct editing activities against alanine. One activity is designated as 'pretransfer' editing and involves the tRNA(Pro)-independent hydrolysis of activated Ala-AMP. The other activity is designated 'posttransfer' editing and involves deacylation of mischarged Ala-tRNA(Pro). The misacylated Cys-tRNA(Pro) is not edited by ProRS. In Chlamydia abortus (strain DSM 27085 / S26/3) (Chlamydophila abortus), this protein is Proline--tRNA ligase.